The sequence spans 540 residues: MAHKELKFNTEARQALERGVNKLADAVKVTLGPKGQYVVLDKKFGSPTITNDGVTIAREIELEDIFENQGAQLLKEVATKTNDVAGDGTTTATVLAQIIVREGLKNVAAGANPVILRNGIEKAVEKAVEAIREQAKEISGKDEIARVGAISARSEEVGNVIAEAIDKVGKDGVVNVEEGQTLGIDLEFTEGMQFDKGYLSPYFVTDQDRMEAVLEDPYILIANQKISNVQDLLPLLNQVMQANKPLLIIAEDVEGEALATLIVNKLRGTFQSCAVKAPGFGDRRKRMMEDIAILTGGEVITEELGLKLENTQLSQLGRARKVVVTKDDTTIVDGAGDPEQIKGRINQIKAELETTDSDFDREKLQERLAKLAGGVAVIKVGAATETELKEKKHRVEDALSATRAALEEGIVPGGGVALLKAQKAVGELLDELDGDERTGARIVYRALEEPIRQIAENAGADGSIVVDKVRAQGDSIGFNALTGGYEDLVAAGVIDPAMVTRSALQNAASIAGLLVTTDVVVAEPEEEQPAMPGGGMGGMM.

ATP contacts are provided by residues 30 to 33, 87 to 91, Gly-414, 479 to 481, and Asp-495; these read TLGP, DGTTT, and NAL.

Belongs to the chaperonin (HSP60) family. As to quaternary structure, forms a cylinder of 14 subunits composed of two heptameric rings stacked back-to-back. Interacts with the co-chaperonin GroES.

It is found in the cytoplasm. The catalysed reaction is ATP + H2O + a folded polypeptide = ADP + phosphate + an unfolded polypeptide.. Together with its co-chaperonin GroES, plays an essential role in assisting protein folding. The GroEL-GroES system forms a nano-cage that allows encapsulation of the non-native substrate proteins and provides a physical environment optimized to promote and accelerate protein folding. The chain is Chaperonin GroEL from Rubrobacter xylanophilus (strain DSM 9941 / JCM 11954 / NBRC 16129 / PRD-1).